The sequence spans 332 residues: Beta-chimaerin (332 aa).

The segment at 78 to 128 (THNFKVHTFRGPHWCEYCANFMWGLIAQGVRCSDCGLNVHKQCSKHVPNDC) adopts a Phorbol-ester/DAG-type zinc-finger fold. In terms of domain architecture, Rho-GAP spans 141-332 (CDLTTLVKAH…ILIENEDVLF (192 aa)).

It is found in the membrane. Its activity is regulated as follows. In the inactive state, the N terminus protrudes into the active site of the Rho-GAP domain, sterically blocking Rac binding. Phospholipid binding to the Phorbol-ester/DAG-type zinc-finger/C1 domain triggers the cooperative dissociation of these interactions, allowing the N-terminus to move out of the active site and thereby activating the enzyme. GTPase-activating protein for p21-rac. The protein is Beta-chimaerin (Chn2) of Mus musculus (Mouse).